The primary structure comprises 298 residues: MYNGIVLVDKPAGLTSFDVVAKLRKIFQQKQVGHTGTLDPSVTGLLVIVLGKATKLIDYLQENQKQYRGTLILGLKTDTQDMDGQVTEMQFLKEAIADFKKKAAFDSFLGSSDQLPPMYSAVKVGGKHLYELARKGETIERKSRKIKVMEFQQVGGSKFDASKGQEYINFVATVSKGTYIRTLIEDFGAKLGLPATMMRLRRIEADGYDVKNSINLEEILASKTPRKFIIPMEKLLPTLPKYSVGSDDWQLIKNGGWLKELPISVSPVKIFYNNSFQAIYEKQDGFYKPKKMLIHEDH.

Asp39 (nucleophile) is an active-site residue.

This sequence belongs to the pseudouridine synthase TruB family. Type 1 subfamily.

The catalysed reaction is uridine(55) in tRNA = pseudouridine(55) in tRNA. Its function is as follows. Responsible for synthesis of pseudouridine from uracil-55 in the psi GC loop of transfer RNAs. The chain is tRNA pseudouridine synthase B from Oenococcus oeni (strain ATCC BAA-331 / PSU-1).